Reading from the N-terminus, the 135-residue chain is Small ribosomal subunit protein bS16 (135 aa).

The interval 106–135 (TERRQKRLVVKSRRRQAKKEAEGKAAGAEA) is disordered. A compositionally biased stretch (basic residues) spans 109–122 (RQKRLVVKSRRRQA).

The protein belongs to the bacterial ribosomal protein bS16 family.

The polypeptide is Small ribosomal subunit protein bS16 (Chlorobium phaeobacteroides (strain DSM 266 / SMG 266 / 2430)).